A 435-amino-acid polypeptide reads, in one-letter code: ATP-dependent RNA helicase SUB2 (435 aa).

A disordered region spans residues 1-40 (MSHEGQEELLDYSDSEEIAVPTTTAPSAAAGEGANDKEAD). The span at 7 to 17 (EELLDYSDSEE) shows a compositional bias: acidic residues. A compositionally biased stretch (low complexity) spans 19–33 (AVPTTTAPSAAAGEG). Residues 51 to 79 (TGFRDFLLKPELLRAIGDCGFEHPSEVQQ) carry the Q motif motif. The region spanning 82 to 257 (IPQSILGTDV…KKFMQNPLEI (176 aa)) is the Helicase ATP-binding domain. 95–102 (AKSGLGKT) is a binding site for ATP. A DECD box motif is present at residues 204–207 (DECD). The Helicase C-terminal domain occupies 269 to 430 (GLQQYYIKLD…EFPEEGVDPS (162 aa)).

This sequence belongs to the DEAD box helicase family. DECD subfamily.

The protein resides in the nucleus. It catalyses the reaction ATP + H2O = ADP + phosphate + H(+). ATP-binding RNA helicase involved in transcription elongation and required for the export of mRNA out of the nucleus. SUB2 also plays a role in pre-mRNA splicing and spliceosome assembly. May be involved in rDNA and telomeric silencing, and maintenance of genome integrity. This chain is ATP-dependent RNA helicase SUB2 (SUB2), found in Debaryomyces hansenii (strain ATCC 36239 / CBS 767 / BCRC 21394 / JCM 1990 / NBRC 0083 / IGC 2968) (Yeast).